A 139-amino-acid polypeptide reads, in one-letter code: Putative general secretion pathway protein B (139 aa).

The helical transmembrane segment at 28-48 threads the bilayer; that stretch reads IIYVICLLLICLWFAGMVLVG. The interval 93-139 is disordered; the sequence is VEEEDDPGVAVENAPSSSEDEENTVEESEEKAGLRERVKNALNELER. The segment covering 110-121 has biased composition (acidic residues); sequence SEDEENTVEESE. Positions 122–139 are enriched in basic and acidic residues; it reads EKAGLRERVKNALNELER.

It localises to the cell membrane. Part of a cryptic operon that encodes proteins involved in type II secretion pathway in other organisms, but is not expressed in strain K12 under standard laboratory conditions. May play a regulatory role under conditions of derepressed gsp gene expression. The protein is Putative general secretion pathway protein B of Escherichia coli (strain K12).